Here is a 1040-residue protein sequence, read N- to C-terminus: Multidrug resistance protein MdtB (1040 aa).

A run of 12 helical transmembrane segments spans residues 16–36, 347–367, 369–389, 396–416, 440–460, 472–492, 537–557, 863–883, 888–908, 911–931, 968–988, and 998–1018; these read FIMR…AGII, LMMA…NIPA, IIPG…MVFL, LTLM…IVVI, IGFT…PLLF, FAIT…TLTP, WLTL…WVFI, LGST…VLGI, FIHP…ALLA, IAGS…IGIV, ILMT…STGV, and IGMV…TPVI.

The protein belongs to the resistance-nodulation-cell division (RND) (TC 2.A.6) family. MdtB subfamily. Part of a tripartite efflux system composed of MdtA, MdtB and MdtC. MdtB forms a heteromultimer with MdtC.

It localises to the cell inner membrane. The chain is Multidrug resistance protein MdtB from Shigella sonnei (strain Ss046).